A 215-amino-acid polypeptide reads, in one-letter code: Tricarboxylate transporter ALT9 (215 aa).

2 Solcar repeats span residues 18-106 (TTVV…LAPM) and 111-197 (CGVS…VVRL). The next 3 helical transmembrane spans lie at 19–39 (TVVGNMVAGMCAGVAESVLVL), 112–132 (GVSTSVVAGALAGVITVYCTM), and 182–202 (VAGAIAFTLYEEVVRLTGFLV).

The protein belongs to the mitochondrial carrier (TC 2.A.29) family.

It localises to the mitochondrion inner membrane. It functions in the pathway mycotoxin biosynthesis. In terms of biological role, tricarboxylate transporter; part of the gene cluster that mediates the biosynthesis of the host-selective toxins (HSTs) AAL-toxins, sphinganine-analog mycotoxins responsible for Alternaria stem canker on tomato by the tomato pathotype. The biosynthesis starts with the polyketide synthase ALT1-catalyzed C-16 carbon chain assembly from one starter acetyl-CoA unit with malonyl-CoA extender units. ALT1 also selectively transfers methyl groups at the first and the third cycle of chain elongation for AAL toxin. The C-16 polyketide chain is released from the enzyme by a nucleophilic attack of a carbanion, which is derived from R-carbon of glycin by decarboxylation, on the carbonyl carbon of polyketide acyl chain. This step is probably catalyzed by a pyridoxal 5'-phosphate-dependent aminoacyl transferase ALT4. The respective functions of the other enzymes encoded by the cluster have still to be elucidated. The sphingosine N-acyltransferase-like protein ALT7 seems not to act as a resistance/self-tolerance factor against the toxin in the toxin biosynthetic gene cluster, contrary to what is expected. This chain is Tricarboxylate transporter ALT9, found in Alternaria alternata (Alternaria rot fungus).